Here is a 107-residue protein sequence, read N- to C-terminus: Ferredoxin Fdx8 (107 aa).

4Fe-4S ferredoxin-type domains lie at 1-31 and 50-79; these read MAYVIAEPCVATCDTACVPVCPVDCIHGPLA and LQLYIDPESCICCGACENECPVGAIFDEDE. Cysteine 9, cysteine 13, cysteine 17, cysteine 21, cysteine 59, cysteine 62, cysteine 65, and cysteine 69 together coordinate [4Fe-4S] cluster.

[4Fe-4S] cluster is required as a cofactor.

In terms of biological role, ferredoxins are iron-sulfur proteins that transfer electrons in a wide variety of metabolic reactions. Fdx2 can receive electrons from both FdR_A and FdR_B ferredoxin reductases, with a preference for FdR_B compared with FdR_A, and transfer the electrons to the cytochrome P450 CYP260A1. This is Ferredoxin Fdx8 from Sorangium cellulosum (strain So ce56) (Polyangium cellulosum (strain So ce56)).